Reading from the N-terminus, the 142-residue chain is Profilin (142 aa).

Belongs to the profilin family. As to quaternary structure, occurs in many kinds of cells as a complex with monomeric actin in a 1:1 ratio. As to expression, expressed specifically in coelomocytes in response to injury.

The protein resides in the cytoplasm. The protein localises to the cytoskeleton. Its function is as follows. Binds to actin and affects the structure of the cytoskeleton. At high concentrations, profilin prevents the polymerization of actin, whereas it enhances it at low concentrations. By binding to PIP2, it inhibits the formation of IP3 and DG. This chain is Profilin, found in Strongylocentrotus purpuratus (Purple sea urchin).